Reading from the N-terminus, the 350-residue chain is Dihydroorotase (350 aa).

Zn(2+)-binding residues include His17 and His19. Substrate is bound by residues 19 to 21 (HLR) and Asn45. 3 residues coordinate Zn(2+): Lys103, His140, and His178. Lys103 is subject to N6-carboxylysine. Position 140 (His140) interacts with substrate. Leu224 is a substrate binding site. Asp252 is a Zn(2+) binding site. Residue Asp252 is part of the active site. Positions 256 and 268 each coordinate substrate.

It belongs to the metallo-dependent hydrolases superfamily. DHOase family. Class II DHOase subfamily. As to quaternary structure, homodimer. Zn(2+) is required as a cofactor.

The catalysed reaction is (S)-dihydroorotate + H2O = N-carbamoyl-L-aspartate + H(+). The protein operates within pyrimidine metabolism; UMP biosynthesis via de novo pathway; (S)-dihydroorotate from bicarbonate: step 3/3. Its function is as follows. Catalyzes the reversible cyclization of carbamoyl aspartate to dihydroorotate. The chain is Dihydroorotase from Buchnera aphidicola subsp. Acyrthosiphon pisum (strain APS) (Acyrthosiphon pisum symbiotic bacterium).